Here is a 370-residue protein sequence, read N- to C-terminus: Notoamide biosynthesis cluster protein J (370 aa).

The N-terminal stretch at 1-22 (MRIMSIMLHLLATILLSSAVSA) is a signal peptide. N-linked (GlcNAc...) asparagine glycans are attached at residues asparagine 159, asparagine 167, asparagine 192, asparagine 235, asparagine 282, asparagine 340, and asparagine 346.

Part of the gene cluster that mediates the biosynthesis of notoamide, a fungal indole alkaloid that belongs to a family of natural products containing a characteristic bicyclo[2.2.2]diazaoctane core. The first step of notoamide biosynthesis involves coupling of L-proline and L-tryptophan by the bimodular NRPS notE, to produce cyclo-L-tryptophan-L-proline called brevianamide F. The reverse prenyltransferase notF then acts as a deoxybrevianamide E synthase and converts brevianamide F to deoxybrevianamide E via reverse prenylation at C-2 of the indole ring leading to the bicyclo[2.2.2]diazaoctane core. Deoxybrevianamide E is further hydroxylated at C-6 of the indole ring, likely catalyzed by the cytochrome P450 monooxygenase notG, to yield 6-hydroxy-deoxybrevianamide E. 6-hydroxy-deoxybrevianamide E is a specific substrate of the prenyltransferase notC for normal prenylation at C-7 to produce 6-hydroxy-7-prenyl-deoxybrevianamide, also called notoamide S. As the proposed pivotal branching point in notoamide biosynthesis, notoamide S can be diverted to notoamide E through an oxidative pyran ring closure putatively catalyzed by either notH cytochrome P450 monooxygenase or the notD FAD-linked oxidoreductase. This step would be followed by an indole 2,3-epoxidation-initiated pinacol-like rearrangement catalyzed by the notB FAD-dependent monooxygenase leading to the formation of notoamide C and notoamide D. On the other hand notoamide S is converted to notoamide T by notH (or notD), a bifunctional oxidase that also functions as the intramolecular Diels-Alderase responsible for generation of (+)-notoamide T. To generate antipodal (-)-notoaminide T, notH' (or notD') in Aspergillus versicolor is expected to catalyze a Diels-Alder reaction leading to the opposite stereochemistry. The remaining oxidoreductase notD (or notH) likely catalyzes the oxidative pyran ring formation to yield (+)-stephacidin A. The FAD-dependent monooxygenase notI is highly similar to notB and is predicted to catalyze a similar conversion from (+)-stephacidin A to (-)-notoamide B via the 2,3-epoxidation of (+)-stephacidin A followed by a pinacol-type rearrangement. Finally, it remains unclear which enzyme could be responsible for the final hydroxylation steps leading to notoamide A and sclerotiamide. The function of notJ in the notoamide biosynthesis has not been determined yet. This chain is Notoamide biosynthesis cluster protein J, found in Aspergillus sp. (strain MF297-2).